The following is a 235-amino-acid chain: Phosphoribosylaminoimidazole-succinocarboxamide synthase (235 aa).

This sequence belongs to the SAICAR synthetase family.

It carries out the reaction 5-amino-1-(5-phospho-D-ribosyl)imidazole-4-carboxylate + L-aspartate + ATP = (2S)-2-[5-amino-1-(5-phospho-beta-D-ribosyl)imidazole-4-carboxamido]succinate + ADP + phosphate + 2 H(+). It participates in purine metabolism; IMP biosynthesis via de novo pathway; 5-amino-1-(5-phospho-D-ribosyl)imidazole-4-carboxamide from 5-amino-1-(5-phospho-D-ribosyl)imidazole-4-carboxylate: step 1/2. The polypeptide is Phosphoribosylaminoimidazole-succinocarboxamide synthase (Thermococcus kodakarensis (strain ATCC BAA-918 / JCM 12380 / KOD1) (Pyrococcus kodakaraensis (strain KOD1))).